The chain runs to 367 residues: Porin Omp2a (367 aa).

An N-terminal signal peptide occupies residues 1 to 22; sequence MNIKSLLLGSAAALVAASGAQA.

Belongs to the alphaproteobacteria porin family. In terms of assembly, monomer.

It is found in the cell outer membrane. Its function is as follows. Forms passive diffusion pores that allow small molecular weight hydrophilic materials across the outer membrane. The polypeptide is Porin Omp2a (omp2a) (Brucella suis).